We begin with the raw amino-acid sequence, 413 residues long: Tyrosine--tRNA ligase (413 aa).

Positions 57 to 66 (PTAPDIHLGH) match the 'HIGH' region motif. The 'KMSKS' region motif lies at 241-245 (KMSKS). Lysine 244 lines the ATP pocket. Residues 351–412 (VWLPRLMVQA…GKRKFARLHT (62 aa)) form the S4 RNA-binding domain.

It belongs to the class-I aminoacyl-tRNA synthetase family. TyrS type 2 subfamily. As to quaternary structure, homodimer.

Its subcellular location is the cytoplasm. It carries out the reaction tRNA(Tyr) + L-tyrosine + ATP = L-tyrosyl-tRNA(Tyr) + AMP + diphosphate + H(+). Functionally, catalyzes the attachment of tyrosine to tRNA(Tyr) in a two-step reaction: tyrosine is first activated by ATP to form Tyr-AMP and then transferred to the acceptor end of tRNA(Tyr). The protein is Tyrosine--tRNA ligase of Moorella thermoacetica (strain ATCC 39073 / JCM 9320).